A 109-amino-acid polypeptide reads, in one-letter code: Protein reprimo (109 aa).

2 N-linked (GlcNAc...) asparagine glycosylation sites follow: Asn7 and Asn18. The helical transmembrane segment at 56 to 76 (VVQIAVMCVLSLTVVFGIFFL) threads the bilayer. Position 98 is a phosphoserine (Ser98).

It belongs to the reprimo family.

The protein resides in the cytoplasm. The protein localises to the membrane. May be involved in the regulation of p53-dependent G2 arrest of the cell cycle. Seems to induce cell cycle arrest by inhibiting CDK1 activity and nuclear translocation of the CDC2 cyclin B1 complex. This chain is Protein reprimo (Rprm), found in Rattus norvegicus (Rat).